The sequence spans 89 residues: Cell division topological specificity factor (89 aa).

This sequence belongs to the MinE family.

Its function is as follows. Prevents the cell division inhibition by proteins MinC and MinD at internal division sites while permitting inhibition at polar sites. This ensures cell division at the proper site by restricting the formation of a division septum at the midpoint of the long axis of the cell. This chain is Cell division topological specificity factor, found in Legionella pneumophila (strain Paris).